A 322-amino-acid chain; its full sequence is Ferredoxin--NADP reductase (322 aa).

FAD contacts are provided by serine 14, aspartate 33, glutamine 41, tyrosine 46, alanine 86, phenylalanine 120, aspartate 278, and serine 319.

This sequence belongs to the ferredoxin--NADP reductase type 2 family. In terms of assembly, homodimer. FAD serves as cofactor.

The enzyme catalyses 2 reduced [2Fe-2S]-[ferredoxin] + NADP(+) + H(+) = 2 oxidized [2Fe-2S]-[ferredoxin] + NADPH. The sequence is that of Ferredoxin--NADP reductase from Salinispora arenicola (strain CNS-205).